Consider the following 438-residue polypeptide: Minor capsid protein p49 (438 aa).

The tract at residues 145–167 is disordered; that stretch reads NCLTQPSSLPSLKNPKNSSVPST.

This sequence belongs to the asfivirus p49 structural protein family.

It is found in the virion. In terms of biological role, together with the penton and the other minor capsid proteins (M1249L, p17), forms a complicated network immediately below the outer capsid shell, stabilizing the whole capsid. Plays an essential role in the formation of infectious virus particles. Especially required for the formation of the capsid vertices. During virion assembly, associates with the membrane and probably mediates the docking of the penton complex to the inner membrane, where it recruits the capsomers to form the penton core. This chain is Minor capsid protein p49, found in Ornithodoros (relapsing fever ticks).